Here is a 517-residue protein sequence, read N- to C-terminus: GMP synthase [glutamine-hydrolyzing] (517 aa).

In terms of domain architecture, Glutamine amidotransferase type-1 spans 9–199 (RILILDFGSQ…VLNVCGCEGL (191 aa)). Cysteine 86 serves as the catalytic Nucleophile. Residues histidine 173 and glutamate 175 contribute to the active site. A GMPS ATP-PPase domain is found at 200–392 (WTSASIIEDA…LGLPYNMLYR (193 aa)). 227-233 (SGGVDSS) is an ATP binding site.

As to quaternary structure, homodimer.

It catalyses the reaction XMP + L-glutamine + ATP + H2O = GMP + L-glutamate + AMP + diphosphate + 2 H(+). The protein operates within purine metabolism; GMP biosynthesis; GMP from XMP (L-Gln route): step 1/1. Its function is as follows. Catalyzes the synthesis of GMP from XMP. In Aliivibrio fischeri (strain ATCC 700601 / ES114) (Vibrio fischeri), this protein is GMP synthase [glutamine-hydrolyzing].